Consider the following 2448-residue polypeptide: Non-reducing polyketide synthase mapC (2448 aa).

Residues 14-226 are N-terminal acylcarrier protein transacylase domain (SAT); sequence VLFGPQCPDI…HHEAHREGIQ (213 aa). Positions 330–350 are disordered; sequence GFSNESPQPSTASLSNSVQTF. The 417-residue stretch at 359–775 folds into the Ketosynthase family 3 (KS3) domain; sequence ASPIAITGMA…GSNAALIVKE (417 aa). Catalysis depends on for beta-ketoacyl synthase activity residues Cys524, His659, and His698. The tract at residues 885-1188 is malonyl-CoA:ACP transacylase (MAT) domain; sequence LCFGGQNGLT…HKIDLGGSSG (304 aa). Ser972 serves as the catalytic For acyl/malonyl transferase activity. The interval 1256–1388 is N-terminal hotdog fold; sequence GQEAGLLCQL…GTVCLHQERS (133 aa). Residues 1256–1565 enclose the PKS/mFAS DH domain; the sequence is GQEAGLLCQL…FTSVSIRSLT (310 aa). Positions 1261 to 1564 are product template (PT) domain; that stretch reads LLCQLSESPD…RFTSVSIRSL (304 aa). His1290 acts as the Proton acceptor; for dehydratase activity in catalysis. Positions 1414-1565 are C-terminal hotdog fold; sequence ASNGLKGSTV…FTSVSIRSLT (152 aa). Asp1471 serves as the catalytic Proton donor; for dehydratase activity. One can recognise a Carrier domain in the interval 1610–1684; it reads AKDLATVQEM…GLVEHIFPGH (75 aa). Ser1644 is modified (O-(pantetheine 4'-phosphoryl)serine). A methyltransferase (CMeT) domain region spans residues 1841-2076; that stretch reads PYALEHDLLQ…GFEWVDWTNN (236 aa). Catalysis depends on for thioesterase activity residues Ser2227, Asp2385, and His2417.

The protein resides in the cytoplasm. It is found in the cytosol. The catalysed reaction is 3 malonyl-CoA + acetyl-CoA + S-adenosyl-L-methionine + H(+) = 5-methylorsellinate + S-adenosyl-L-homocysteine + 3 CO2 + 4 CoA. It participates in secondary metabolite biosynthesis; terpenoid biosynthesis. Non-reducing polyketide synthase; part of the gene cluster that mediates the biosynthesis of mycophenolic acid (MPA), the first isolated antibiotic natural product in the world obtained from a culture of Penicillium brevicompactum in 1893. MpaC catalyzes the synthesis of 5-methylorsellinic acid (5MOA) via the condensation of 1 acetyl-CoA starter unit with 3 malonyl-CoA units and one methylation step. The first step of the pathway is the synthesis of 5-methylorsellinic acid (5MOA) by the cytosolic polyketide synthase mpaC. 5MOA is then converted to the phthalide compound 5,7-dihydroxy-4,6-dimethylphthalide (DHMP) by the endoplasmic reticulum-bound cytochrome P450 monooxygenase mpaDE. MpaDE first catalyzes hydroxylation of 5-MOA to 4,6-dihydroxy-2-(hydroxymethyl)-3-methylbenzoic acid (DHMB). MpaDE then acts as a lactone synthase that catalyzes the ring closure to convert DHMB into DHMP. The next step is the prenylation of DHMP by the Golgi apparatus-associated prenyltransferase mpaA to yield farnesyl-DHMP (FDHMP). The ER-bound oxygenase mpaB then mediates the oxidative cleavage the C19-C20 double bond in FDHMP to yield FDHMP-3C via a mycophenolic aldehyde intermediate. The O-methyltransferase mpaG catalyzes the methylation of FDHMP-3C to yield MFDHMP-3C. After the cytosolic methylation of FDHMP-3C, MFDHMP-3C enters into peroxisomes probably via free diffusion due to its low molecular weight. Upon a peroxisomal CoA ligation reaction, catalyzed by a beta-oxidation component enzyme acyl-CoA ligase ACL891, MFDHMP-3C-CoA would then be restricted to peroxisomes for the following beta-oxidation pathway steps. The peroxisomal beta-oxidation machinery than converts MFDHMP-3C-CoA into MPA_CoA, via a beta-oxidation chain-shortening process. Finally mpaH acts as a peroxisomal acyl-CoA hydrolase with high substrate specificity toward MPA-CoA to release the final product MPA. The chain is Non-reducing polyketide synthase mapC from Penicillium brevicompactum.